The chain runs to 160 residues: Cyanate hydratase (160 aa).

Active-site residues include Arg100, Glu103, and Ser126.

It belongs to the cyanase family.

The catalysed reaction is cyanate + hydrogencarbonate + 3 H(+) = NH4(+) + 2 CO2. In terms of biological role, catalyzes the reaction of cyanate with bicarbonate to produce ammonia and carbon dioxide. This Aspergillus oryzae (strain ATCC 42149 / RIB 40) (Yellow koji mold) protein is Cyanate hydratase.